The chain runs to 225 residues: MSNTVATMINKRNIMRNYIKIGVAGPVGAGKTALIEKLTREIASKYSVAVITNDIYTQEDAEFLTKNSLLPPERIMGVETGGCPHTAIREDASMNLEAVDEMVTRFPDVEIVFIESGGDNLSATFSPDLADVTIFVIDVAQGEKIPRKGGPGITRSDLLVINKTDLAPFVGVDLSVMERDARRMRNGQPFIFTNLMKKENLDGVIGWIEKYALLKNVEEPASLVR.

25-32 (GPVGAGKT) contacts GTP.

It belongs to the SIMIBI class G3E GTPase family. UreG subfamily. As to quaternary structure, homodimer. UreD, UreF and UreG form a complex that acts as a GTP-hydrolysis-dependent molecular chaperone, activating the urease apoprotein by helping to assemble the nickel containing metallocenter of UreC. The UreE protein probably delivers the nickel.

It localises to the cytoplasm. Functionally, facilitates the functional incorporation of the urease nickel metallocenter. This process requires GTP hydrolysis, probably effectuated by UreG. The chain is Urease accessory protein UreG from Haemophilus influenzae (strain 86-028NP).